The primary structure comprises 505 residues: Aspartyl/glutamyl-tRNA(Asn/Gln) amidotransferase subunit B (505 aa).

Belongs to the GatB/GatE family. GatB subfamily. In terms of assembly, heterotrimer of A, B and C subunits.

It carries out the reaction L-glutamyl-tRNA(Gln) + L-glutamine + ATP + H2O = L-glutaminyl-tRNA(Gln) + L-glutamate + ADP + phosphate + H(+). The catalysed reaction is L-aspartyl-tRNA(Asn) + L-glutamine + ATP + H2O = L-asparaginyl-tRNA(Asn) + L-glutamate + ADP + phosphate + 2 H(+). Its function is as follows. Allows the formation of correctly charged Asn-tRNA(Asn) or Gln-tRNA(Gln) through the transamidation of misacylated Asp-tRNA(Asn) or Glu-tRNA(Gln) in organisms which lack either or both of asparaginyl-tRNA or glutaminyl-tRNA synthetases. The reaction takes place in the presence of glutamine and ATP through an activated phospho-Asp-tRNA(Asn) or phospho-Glu-tRNA(Gln). This Haloarcula marismortui (strain ATCC 43049 / DSM 3752 / JCM 8966 / VKM B-1809) (Halobacterium marismortui) protein is Aspartyl/glutamyl-tRNA(Asn/Gln) amidotransferase subunit B.